The following is a 447-amino-acid chain: Exodeoxyribonuclease 7 large subunit (447 aa).

It belongs to the XseA family. Heterooligomer composed of large and small subunits.

The protein localises to the cytoplasm. It catalyses the reaction Exonucleolytic cleavage in either 5'- to 3'- or 3'- to 5'-direction to yield nucleoside 5'-phosphates.. Functionally, bidirectionally degrades single-stranded DNA into large acid-insoluble oligonucleotides, which are then degraded further into small acid-soluble oligonucleotides. In Exiguobacterium sibiricum (strain DSM 17290 / CCUG 55495 / CIP 109462 / JCM 13490 / 255-15), this protein is Exodeoxyribonuclease 7 large subunit.